The sequence spans 236 residues: Aspartate/glutamate leucyltransferase (236 aa).

This sequence belongs to the R-transferase family. Bpt subfamily.

The protein resides in the cytoplasm. It carries out the reaction N-terminal L-glutamyl-[protein] + L-leucyl-tRNA(Leu) = N-terminal L-leucyl-L-glutamyl-[protein] + tRNA(Leu) + H(+). The enzyme catalyses N-terminal L-aspartyl-[protein] + L-leucyl-tRNA(Leu) = N-terminal L-leucyl-L-aspartyl-[protein] + tRNA(Leu) + H(+). Functions in the N-end rule pathway of protein degradation where it conjugates Leu from its aminoacyl-tRNA to the N-termini of proteins containing an N-terminal aspartate or glutamate. In Saccharophagus degradans (strain 2-40 / ATCC 43961 / DSM 17024), this protein is Aspartate/glutamate leucyltransferase.